The chain runs to 123 residues: Small ribosomal subunit protein uS12c (123 aa).

The protein belongs to the universal ribosomal protein uS12 family. As to quaternary structure, part of the 30S ribosomal subunit.

The protein localises to the plastid. It is found in the chloroplast. In terms of biological role, with S4 and S5 plays an important role in translational accuracy. Located at the interface of the 30S and 50S subunits. The protein is Small ribosomal subunit protein uS12c (rps12) of Chlorokybus atmophyticus (Soil alga).